We begin with the raw amino-acid sequence, 194 residues long: Imidazoleglycerol-phosphate dehydratase (194 aa).

This sequence belongs to the imidazoleglycerol-phosphate dehydratase family.

It localises to the cytoplasm. It catalyses the reaction D-erythro-1-(imidazol-4-yl)glycerol 3-phosphate = 3-(imidazol-4-yl)-2-oxopropyl phosphate + H2O. Its pathway is amino-acid biosynthesis; L-histidine biosynthesis; L-histidine from 5-phospho-alpha-D-ribose 1-diphosphate: step 6/9. In Streptococcus gordonii (strain Challis / ATCC 35105 / BCRC 15272 / CH1 / DL1 / V288), this protein is Imidazoleglycerol-phosphate dehydratase.